A 211-amino-acid chain; its full sequence is Transcriptional regulator GfcR (211 aa).

Belongs to the purine/pyrimidine phosphoribosyltransferase family. GfcR subfamily.

This is Transcriptional regulator GfcR from Methanocaldococcus jannaschii (strain ATCC 43067 / DSM 2661 / JAL-1 / JCM 10045 / NBRC 100440) (Methanococcus jannaschii).